The chain runs to 222 residues: UPF0758 protein Ppha_0935 (222 aa).

The MPN domain occupies 100 to 222 (KIQAARDVFE…CFSFRESGLL (123 aa)). His171, His173, and Asp184 together coordinate Zn(2+). The JAMM motif motif lies at 171-184 (HNHPSGDVEPSNAD).

It belongs to the UPF0758 family.

In Pelodictyon phaeoclathratiforme (strain DSM 5477 / BU-1), this protein is UPF0758 protein Ppha_0935.